The chain runs to 286 residues: Interferon-induced 35 kDa protein (286 aa).

Residues 5–26 (LDAALHALQEEQARLKMRLWDL) form a leucine-zipper region. NID domains are found at residues 81–170 (ALIT…GDVD) and 183–266 (FARD…GEVE).

It belongs to the NMI family. In terms of assembly, homodimer. Also interacts with BATF. Interacts with TRIM21. Interacts with NMI; the interaction is direct and is facilitated by TRIM21. In terms of processing, phosphorylated. Dephosphorylation correlates with the formation of a complex with NMI. As to expression, expressed in a wide range of cell types, including fibroblasts, macrophages, and epithelial cells.

It localises to the cytoplasm. It is found in the nucleus. The protein resides in the secreted. Functionally, acts as a signaling pathway regulator involved in innate immune system response. In response to interferon IFN-alpha, associates in a complex with signaling pathway regulator NMI to regulate immune response; the complex formation prevents proteasome-mediated degradation of IFI35 and correlates with IFI35 dephosphorylation. In complex with NMI, inhibits virus-triggered type I interferon/IFN-beta production. In complex with NMI, negatively regulates nuclear factor NF-kappa-B signaling by inhibiting the nuclear translocation, activation and transcription of the NF-kappa-B subunit p65/RELA, resulting in the inhibition of endothelial cell proliferation, migration and re-endothelialization of injured arteries. Beside its role as an intracellular signaling pathway regulator, also functions extracellularly as damage-associated molecular patterns (DAMPs) to promote inflammation when actively released by macrophage to the extracellular space during cell injury and pathogen invasion. Macrophage-secreted IFI35 activates NF-kappa-B signaling in adjacent macrophages through Toll-like receptor 4/TLR4 activation, thereby inducing NF-kappa-B translocation from the cytoplasm into the nucleus which promotes the release of pro-inflammatory cytokines. The polypeptide is Interferon-induced 35 kDa protein (Homo sapiens (Human)).